We begin with the raw amino-acid sequence, 580 residues long: NADH-quinone oxidoreductase subunit C/D (580 aa).

Residues 1–171 (MSLDQAIPEA…PPFVLTDRLF (171 aa)) form an NADH dehydrogenase I subunit C region. An NADH dehydrogenase I subunit D region spans residues 195–580 (ELMVLNFGPH…IDFVMSDVDR (386 aa)).

This sequence in the N-terminal section; belongs to the complex I 30 kDa subunit family. In the C-terminal section; belongs to the complex I 49 kDa subunit family. NDH-1 is composed of 13 different subunits. Subunits NuoB, CD, E, F, and G constitute the peripheral sector of the complex.

It is found in the cell inner membrane. It catalyses the reaction a quinone + NADH + 5 H(+)(in) = a quinol + NAD(+) + 4 H(+)(out). In terms of biological role, NDH-1 shuttles electrons from NADH, via FMN and iron-sulfur (Fe-S) centers, to quinones in the respiratory chain. The immediate electron acceptor for the enzyme in this species is believed to be ubiquinone. Couples the redox reaction to proton translocation (for every two electrons transferred, four hydrogen ions are translocated across the cytoplasmic membrane), and thus conserves the redox energy in a proton gradient. The chain is NADH-quinone oxidoreductase subunit C/D from Cereibacter sphaeroides (strain KD131 / KCTC 12085) (Rhodobacter sphaeroides).